A 73-amino-acid polypeptide reads, in one-letter code: Disintegrin barbourin (73 aa).

The 73-residue stretch at glutamate 1 to glycine 73 folds into the Disintegrin domain. Intrachain disulfides connect cysteine 6–cysteine 21, cysteine 8–cysteine 16, cysteine 15–cysteine 38, cysteine 29–cysteine 35, cysteine 34–cysteine 59, and cysteine 47–cysteine 66. Positions lysine 51–aspartate 53 match the Cell attachment site; atypical (KGD) motif.

The protein belongs to the venom metalloproteinase (M12B) family. P-II subfamily. P-IIa sub-subfamily. Monomer. As to expression, expressed by the venom gland.

It localises to the secreted. Inhibitor of ligand binding to the integrins alpha-IIb/beta-3 (ITGA2B/ITGB3). Competition with fibrinogen for the RGD recognition sites on the alpha-IIb/beta-3 integrin results in the inhibition of platelet aggregation induced by ADP, thrombin, platelet-activating factor and collagen. The sequence is that of Disintegrin barbourin from Sistrurus miliarius barbouri (Dusky pigmy rattlesnake).